A 539-amino-acid chain; its full sequence is MADLDAAWTRLEAAAKAAGDKRIVEFFDAEPGRLDALTLDVAGLHLDLSKQAWDEAGLEAALDLAHAADVEGARARMFDGEAINSSEGRAVLHTALRAPAGADVKALGQPVMAEVDAVRQRMKAFAQAVRSGAIKGATGKPFKAILHIGIGGSDLGPRLLWDALRPVKPSIDLRFVANVDGAEFALTTADMDPEETLVMVVSKTFTTQETMANAGAARAWLVAALGEQGANQHLAAISTALDKTAAFGVPDDRVFGFWDWVGGRYSLWSSVSLSVAVAAGWDAFQGFLDGGAAMDEHFRTAPLEQNAPVLVALAQIFNRNGLDRRARSVVPYSHRLRRLAAFLQQLEMESNGKSVGPDGQPAKRGTATVVFGDEGTNVQHAYFQCMHQGTDITPMELIGVAKSDEGPAGMHEKLLSNLLAQAEAFMVGRTTDDVVAELTAKGVSDAEIATLAPQRTFAGNRPSTLVLLDRLTPQTFGALIALYEHKTFVEGVIWGINSFDQWGVELGKVMANRILPELESGASGQHDPSTAGLIQRLKR.

Glu349 serves as the catalytic Proton donor. Catalysis depends on residues His380 and Lys508. The tract at residues 519-539 (ESGASGQHDPSTAGLIQRLKR) is disordered.

This sequence belongs to the GPI family.

It is found in the cytoplasm. It carries out the reaction alpha-D-glucose 6-phosphate = beta-D-fructose 6-phosphate. It functions in the pathway carbohydrate biosynthesis; gluconeogenesis. It participates in carbohydrate degradation; glycolysis; D-glyceraldehyde 3-phosphate and glycerone phosphate from D-glucose: step 2/4. Its function is as follows. Catalyzes the reversible isomerization of glucose-6-phosphate to fructose-6-phosphate. In Caulobacter vibrioides (strain ATCC 19089 / CIP 103742 / CB 15) (Caulobacter crescentus), this protein is Glucose-6-phosphate isomerase.